The following is a 756-amino-acid chain: Neutral ceramidase (756 aa).

Topologically, residues 1–11 (MAKRTFSTLEA) are cytoplasmic. A helical; Signal-anchor for type II membrane protein membrane pass occupies residues 12 to 32 (FLIFLLVIMTVITVALLTLLF). Over 33–756 (VTSGTIENHK…ISSPFEVVTT (724 aa)) the chain is Lumenal. O-linked (GalNAc...) threonine glycosylation is found at T56, T57, T58, and T64. L110 is a Ca(2+) binding site. A Zn(2+)-binding site is contributed by H170. The N-linked (GlcNAc...) asparagine glycan is linked to N193. Position 279 (H279) interacts with Zn(2+). Residue S330 is the Nucleophile of the active site. Disulfide bonds link C338/C352 and C345/C360. Residues N407 and N444 are each glycosylated (N-linked (GlcNAc...) asparagine). C424 and C474 form a disulfide bridge. Residues E516 and Y555 each coordinate Zn(2+). 3 residues coordinate Ca(2+): D688, S690, and T693. Residues 746 to 756 (GISSPFEVVTT) are required for correct folding and localization.

Belongs to the neutral ceramidase family. In terms of assembly, may interact with CAV1. It depends on Zn(2+) as a cofactor. Post-translationally, proteolytic cleavage of the N-terminus removes the signal-anchor and produces a soluble form of the protein. In terms of processing, N-glycosylated. Required for enzyme activity. O-glycosylated. Required to retain it as a type II membrane protein at the cell surface. Post-translationally, phosphorylated. May prevent ubiquitination and subsequent degradation. In terms of processing, ubiquitinated, leading to its degradation by the proteasome. Ubiquitination is triggered by nitric oxide. Widely expressed. Strongly expressed in small intestine and to a lower extent in liver and kidney. Highly expressed in duodenum, jejunum and ileum along the brush border of the small intestine (at protein level).

It localises to the cell membrane. The protein localises to the membrane raft. The protein resides in the membrane. It is found in the caveola. Its subcellular location is the golgi apparatus membrane. It localises to the mitochondrion. The protein localises to the secreted. The protein resides in the extracellular exosome. The enzyme catalyses an N-acylsphing-4-enine + H2O = sphing-4-enine + a fatty acid. It carries out the reaction N-hexadecanoylsphing-4-enine + H2O = sphing-4-enine + hexadecanoate. It catalyses the reaction N-dodecanoylsphing-4-enine + H2O = dodecanoate + sphing-4-enine. The catalysed reaction is N-octadecanoylsphing-4-enine + H2O = sphing-4-enine + octadecanoate. The enzyme catalyses N-octanoylsphing-4-enine + H2O = octanoate + sphing-4-enine. It carries out the reaction N-(hexanoyl)sphing-4-enine + H2O = hexanoate + sphing-4-enine. It catalyses the reaction N-tetradecanoylsphing-4-enine + H2O = tetradecanoate + sphing-4-enine. The catalysed reaction is N-(9Z-octadecenoyl)-sphing-4-enine + H2O = sphing-4-enine + (9Z)-octadecenoate. The enzyme catalyses N-(15Z-tetracosenoyl)-sphing-4-enine + H2O = (15Z)-tetracosenoate + sphing-4-enine. It carries out the reaction sphinganine + hexadecanoate = N-hexadecanoylsphinganine + H2O. It catalyses the reaction N-(octadecanoyl)-sphinganine + H2O = sphinganine + octadecanoate. It participates in lipid metabolism; sphingolipid metabolism. With respect to regulation, inhibited by D-erythro-MAPP. In terms of biological role, plasma membrane ceramidase that hydrolyzes sphingolipid ceramides into sphingosine and free fatty acids at neutral pH. Ceramides, sphingosine, and its phosphorylated form sphingosine-1-phosphate are bioactive lipids that mediate cellular signaling pathways regulating several biological processes including cell proliferation, apoptosis and differentiation. Also catalyzes the reverse reaction allowing the synthesis of ceramides from fatty acids and sphingosine. Together with sphingomyelinase, participates in the production of sphingosine and sphingosine-1-phosphate from the degradation of sphingomyelin, a sphingolipid enriched in the plasma membrane of cells. Also participates in the hydrolysis of ceramides from the extracellular milieu allowing the production of sphingosine-1-phosphate inside and outside cells. This is the case for instance with the digestion of dietary sphingolipids in the intestinal tract. The polypeptide is Neutral ceramidase (Asah2) (Mus musculus (Mouse)).